The sequence spans 150 residues: Cytochrome c-type biogenesis protein CcmE (150 aa).

At 1–7 (MTRKQKR) the chain is on the cytoplasmic side. A helical; Signal-anchor for type II membrane protein membrane pass occupies residues 8 to 28 (LAIIGGGVGFLTAAVLLVMFA). The Periplasmic portion of the chain corresponds to 29-150 (FSQAVAYFYV…VTLGGKENIQ (122 aa)). Heme contacts are provided by His123 and Tyr127.

It belongs to the CcmE/CycJ family.

The protein localises to the cell inner membrane. Its function is as follows. Heme chaperone required for the biogenesis of c-type cytochromes. Transiently binds heme delivered by CcmC and transfers the heme to apo-cytochromes in a process facilitated by CcmF and CcmH. The sequence is that of Cytochrome c-type biogenesis protein CcmE from Sinorhizobium fredii (strain NBRC 101917 / NGR234).